Reading from the N-terminus, the 160-residue chain is MGYKLLLMYIAIVIDSVIGTAEVMSHVTAHFGKALEECRDESGLSPEILNEFKHFWSEDFDVVHRELGCAIICMSNKFSLLKDDTRIHHVNMHDYVKSFPNGEVLSAKMVNLIHNCEKQYDDITDECDRVVKVAACFKVDAKKEGIAPEVAMIEAVIEKY.

An N-terminal signal peptide occupies residues 1 to 19 (MGYKLLLMYIAIVIDSVIG). Disulfide bonds link cysteine 38/cysteine 73, cysteine 69/cysteine 127, and cysteine 116/cysteine 136.

It belongs to the PBP/GOBP family. As to expression, antenna.

Present in the aqueous fluid surrounding olfactory sensory dendrites and are thought to aid in the capture and transport of hydrophobic odorants into and through this fluid. The chain is General odorant-binding protein 2 from Antheraea pernyi (Chinese oak silk moth).